Here is a 516-residue protein sequence, read N- to C-terminus: Polyprenol-phosphate-mannose--protein mannosyltransferase (516 aa).

Residues 1-11 (MTALDTDTPTA) are compositionally biased toward polar residues. The disordered stretch occupies residues 1 to 23 (MTALDTDTPTAGRSAPLISPGPV). Transmembrane regions (helical) follow at residues 113 to 133 (YNGL…VMLV), 143 to 163 (STLV…SFVS), 166 to 186 (TALL…CLMV), 234 to 254 (WSGL…DAIA), 275 to 295 (AAYV…APWF), 384 to 404 (VMLV…GWAL), 413 to 433 (WRYG…FADI), 437 to 457 (MYFF…ALIL), and 473 to 493 (LGLL…AWMY).

The protein belongs to the glycosyltransferase 39 family.

The protein resides in the cell membrane. It participates in protein modification; protein glycosylation. Protein O-mannosyltransferase that catalyzes the transfer of a single mannose residue from a polyprenol phospho-mannosyl lipidic donor to the hydroxyl group of selected serine and threonine residues in acceptor proteins. Involved in DNA conjugation, in at least the recipient strain. In Mycolicibacterium smegmatis (strain MKD8) (Mycobacterium smegmatis), this protein is Polyprenol-phosphate-mannose--protein mannosyltransferase (pmt).